The sequence spans 37 residues: Albumin-2 (37 aa).

The stretch at 6-37 is one Hemopexin repeat; sequence IANFSVLNXEAYLFINDKYVLLDYAPGTXNDK.

Dimer. As to expression, expressed in seeds (at protein level).

The protein localises to the cytoplasm. It localises to the cytosol. In terms of biological role, binds hemin and thiamine. This is Albumin-2 from Lens culinaris (Lentil).